We begin with the raw amino-acid sequence, 197 residues long: Probable GTP-binding protein EngB (197 aa).

The EngB-type G domain maps to 22–195; the sequence is ELPEVALAGR…WKAIYALITE (174 aa). GTP is bound by residues 30–37, 57–61, 75–78, 142–145, and 174–176; these read GRSNVGKS, GKTQT, DVPG, TKLD, and FSA. S37 and T59 together coordinate Mg(2+).

It belongs to the TRAFAC class TrmE-Era-EngA-EngB-Septin-like GTPase superfamily. EngB GTPase family. Mg(2+) serves as cofactor.

Necessary for normal cell division and for the maintenance of normal septation. This is Probable GTP-binding protein EngB from Exiguobacterium sp. (strain ATCC BAA-1283 / AT1b).